The following is a 154-amino-acid chain: Pro-corazonin (154 aa).

Residues M1–G19 form the signal peptide. Q20 carries the post-translational modification Pyrrolidone carboxylic acid. At N30 the chain carries Asparagine amide. A propeptide spanning residues L70 to H154 is cleaved from the precursor.

The protein belongs to the corazonin family. Expression is restricted to 24 neurons in the larval CNS (8 in the brain and 16 in the ventral nerve cord) and 12-16 neurons in the pars lateralis of the adult brain.

Its subcellular location is the secreted. Its function is as follows. Cardioactive peptide. Corazonin is probably involved in the physiological regulation of the heart beat. Clock (Clk) and cycle (cyc) proteins negatively regulate Crz transcription in a cell-specific manner. The chain is Pro-corazonin (Crz) from Drosophila erecta (Fruit fly).